The following is a 1118-amino-acid chain: Cytospin-A (1118 aa).

Residues 1–176 (MKKASRSVGS…SKSKSDNQIS (176 aa)) form a disordered region. The segment covering 29 to 52 (ESGSSLSAVTKLSKPGTSASLLKT) has biased composition (polar residues). A compositionally biased stretch (low complexity) spans 79–119 (STCASTVSSTTGTTMSTLENKPRTVAGSTARRSTSSGTKES). Composition is skewed to basic and acidic residues over residues 120–131 (SSSRERIRDRSR) and 158–171 (TNPE…KSKS). Positions 193–281 (KTKDVEILHL…LNALGFSLEQ (89 aa)) form a coiled coil. Disordered regions lie at residues 299 to 324 (ITAG…GSME) and 359 to 391 (SSDD…NASE). A compositionally biased stretch (low complexity) spans 359–373 (SSDDALDAPSSSESE). Coiled-coil stretches lie at residues 396–450 (CLTE…MESL) and 488–808 (RYME…RGRV). 2 disordered regions span residues 856–879 (PSPA…PPAA) and 921–1002 (TSST…RKDP). The span at 937–946 (ESAKSISVSR) shows a compositional bias: low complexity. Residues 947 to 957 (RSSEEIKRDIS) are compositionally biased toward basic and acidic residues. Over residues 972 to 991 (TTSPQLSLSSSPTASVTPTT) the composition is skewed to low complexity. In terms of domain architecture, Calponin-homology (CH) spans 1012–1117 (GSKRNALLKW…YVTAIYKYFE (106 aa)).

Belongs to the cytospin-A family. In terms of assembly, may interact with both microtubules and actin cytoskeleton.

It localises to the cytoplasm. The protein localises to the cytoskeleton. The protein resides in the spindle. It is found in the cell junction. Its subcellular location is the gap junction. Functionally, involved in cytokinesis and spindle organization. May play a role in actin cytoskeleton organization and microtubule stabilization and hence required for proper cell adhesion and migration. The sequence is that of Cytospin-A (SPECC1L) from Gallus gallus (Chicken).